The following is a 390-amino-acid chain: GTPase Obg (390 aa).

Positions 1–159 (MKFVDEASIL…RELLLELMLL (159 aa)) constitute an Obg domain. Positions 127–147 (NTRFKSSVNRTPRQKTNGTPG) are disordered. The span at 129–145 (RFKSSVNRTPRQKTNGT) shows a compositional bias: polar residues. Residues 160 to 333 (ADVGMLGMPN…LCWDVMTFII (174 aa)) enclose the OBG-type G domain. Residues 166–173 (GMPNAGKS), 191–195 (FTTLV), 213–216 (DIPG), 283–286 (NKID), and 314–316 (SAA) each bind GTP. Positions 173 and 193 each coordinate Mg(2+).

Belongs to the TRAFAC class OBG-HflX-like GTPase superfamily. OBG GTPase family. As to quaternary structure, monomer. Mg(2+) is required as a cofactor.

It is found in the cytoplasm. Functionally, an essential GTPase which binds GTP, GDP and possibly (p)ppGpp with moderate affinity, with high nucleotide exchange rates and a fairly low GTP hydrolysis rate. Plays a role in control of the cell cycle, stress response, ribosome biogenesis and in those bacteria that undergo differentiation, in morphogenesis control. The sequence is that of GTPase Obg from Escherichia coli (strain K12 / DH10B).